A 253-amino-acid chain; its full sequence is Indole-3-glycerol phosphate synthase (253 aa).

It belongs to the TrpC family.

It catalyses the reaction 1-(2-carboxyphenylamino)-1-deoxy-D-ribulose 5-phosphate + H(+) = (1S,2R)-1-C-(indol-3-yl)glycerol 3-phosphate + CO2 + H2O. It participates in amino-acid biosynthesis; L-tryptophan biosynthesis; L-tryptophan from chorismate: step 4/5. This chain is Indole-3-glycerol phosphate synthase, found in Bacillus mycoides (strain KBAB4) (Bacillus weihenstephanensis).